Reading from the N-terminus, the 510-residue chain is GTPase Der (510 aa).

2 EngA-type G domains span residues 3–167 (LKLA…GPEA) and 230–405 (IRLA…KDWT). GTP contacts are provided by residues 9-16 (GRPNVGKS), 56-60 (DTAGF), 119-122 (NKAE), 236-243 (GRPNAGKS), 283-287 (DTAGL), and 348-351 (SKWD). The KH-like domain maps to 406–490 (ARAKTGDLNR…PIRLFVRQGK (85 aa)).

It belongs to the TRAFAC class TrmE-Era-EngA-EngB-Septin-like GTPase superfamily. EngA (Der) GTPase family. Associates with the 50S ribosomal subunit.

GTPase that plays an essential role in the late steps of ribosome biogenesis. This chain is GTPase Der, found in Hyphomonas neptunium (strain ATCC 15444).